A 567-amino-acid polypeptide reads, in one-letter code: TGF-beta receptor type-2 (567 aa).

Positions 1–23 (MGRGLLRGLWPLHIVLWTRIAST) are cleaved as a signal peptide. The Extracellular portion of the chain corresponds to 24 to 166 (IPPHVPKSVN…SPDLLLVIIQ (143 aa)). Disulfide bonds link C51/C84, C54/C71, C61/C67, C77/C101, C121/C136, and C138/C143. 2 N-linked (GlcNAc...) asparagine glycosylation sites follow: N70 and N94. Residues 167-187 (VTGVSLLPPLGIAIAVIIIFY) traverse the membrane as a helical segment. Residues 188 to 567 (CYRVHRQQKL…PEDGSLNTTK (380 aa)) are Cytoplasmic-facing. The Protein kinase domain maps to 244-546 (IELDTLVGKG…RFSELEHPER (303 aa)). Residues 250 to 258 (VGKGRFAEV) and K277 each bind ATP. D379 functions as the Proton acceptor in the catalytic mechanism. A phosphoserine mark is found at S409, S548, and S553. The tract at residues 545–567 (ERLSGRSCSQEKIPEDGSLNTTK) is disordered.

Belongs to the protein kinase superfamily. TKL Ser/Thr protein kinase family. TGFB receptor subfamily. Homodimer. Heterohexamer; TGFB1, TGFB2 and TGFB3 homodimeric ligands assemble a functional receptor composed of two TGFBR1 and TGFBR2 heterodimers to form a ligand-receptor heterohexamer. The respective affinity of TGFRB1 and TGFRB2 for the ligands may modulate the kinetics of assembly of the receptor and may explain the different biological activities of TGFB1, TGFB2 and TGFB3. Component of a complex composed of TSC22D1 (via N-terminus), TGFBR1 and TGFBR2; the interaction between TSC22D1 and TGFBR1 is inhibited by SMAD7 and promoted by TGFB1. Interacts with DAXX. Interacts with DYNLT4. Interacts with ZFYVE9; ZFYVE9 recruits SMAD2 and SMAD3 to the TGF-beta receptor. Interacts with and is activated by SCUBE3; this interaction does not affect TGFB1-binding to TGFBR2. Interacts with VPS39; this interaction is independent of the receptor kinase activity and of the presence of TGF-beta. Interacts with CLU. Mg(2+) serves as cofactor. It depends on Mn(2+) as a cofactor. In terms of processing, phosphorylated on a Ser/Thr residue in the cytoplasmic domain. As to expression, widely expressed in adult. Expressed primarily in mesenchyme and epidermis of the midgestational fetus.

The protein resides in the cell membrane. The protein localises to the membrane raft. It catalyses the reaction L-threonyl-[receptor-protein] + ATP = O-phospho-L-threonyl-[receptor-protein] + ADP + H(+). The catalysed reaction is L-seryl-[receptor-protein] + ATP = O-phospho-L-seryl-[receptor-protein] + ADP + H(+). Transmembrane serine/threonine kinase forming with the TGF-beta type I serine/threonine kinase receptor, TGFBR1, the non-promiscuous receptor for the TGF-beta cytokines TGFB1, TGFB2 and TGFB3. Transduces the TGFB1, TGFB2 and TGFB3 signal from the cell surface to the cytoplasm and is thus regulating a plethora of physiological and pathological processes including cell cycle arrest in epithelial and hematopoietic cells, control of mesenchymal cell proliferation and differentiation, wound healing, extracellular matrix production, immunosuppression and carcinogenesis. The formation of the receptor complex composed of 2 TGFBR1 and 2 TGFBR2 molecules symmetrically bound to the cytokine dimer results in the phosphorylation and the activation of TGFRB1 by the constitutively active TGFBR2. Activated TGFBR1 phosphorylates SMAD2 which dissociates from the receptor and interacts with SMAD4. The SMAD2-SMAD4 complex is subsequently translocated to the nucleus where it modulates the transcription of the TGF-beta-regulated genes. This constitutes the canonical SMAD-dependent TGF-beta signaling cascade. Also involved in non-canonical, SMAD-independent TGF-beta signaling pathways. Functionally, has transforming growth factor beta-activated receptor activity. In Mus musculus (Mouse), this protein is TGF-beta receptor type-2 (Tgfbr2).